Reading from the N-terminus, the 189-residue chain is Large ribosomal subunit protein bL9 (189 aa).

Belongs to the bacterial ribosomal protein bL9 family.

Binds to the 23S rRNA. In Brucella abortus (strain S19), this protein is Large ribosomal subunit protein bL9.